Reading from the N-terminus, the 2271-residue chain is Serine-rich adhesin for platelets (2271 aa).

An N-terminal signal peptide occupies residues Met1–Phe89. The segment at Ala90–Ala230 is serine-rich repeat region 1, SRR1. Polar residues predominate over residues Leu100 to Asn111. The tract at residues Leu100–Thr229 is disordered. Residues Ser112 to Thr128 show a composition bias toward low complexity. Residues Lys129–Asp140 show a composition bias toward polar residues. A compositionally biased stretch (low complexity) spans Val150 to Thr229. The interval Pro231 to Asn751 is non-repeat region (NRR). The interval Phe245–Tyr491 is L-lectin module. 4 residues coordinate Ca(2+): Asp365, Tyr367, Asn369, and Asp382. Residues Thr492–Phe571 form a beta-grasp module region. The interval Thr572–Val659 is cadherin-like module-1. 10 residues coordinate Ca(2+): Asp573, Lys575, Asp601, Asn602, Asp645, Asp661, Thr663, Asp690, Asn691, and Asp734. The cadherin-like module-2 stretch occupies residues Val660 to Asn751. 2 disordered regions span residues Asn751–Thr791 and Ser806–Leu2242. Composition is skewed to low complexity over residues Ser752–Thr791, Ser806–Ser1392, and Ser1402–Glu2214. The tract at residues Ser752–Thr2232 is serine-rich repeat region 2, SRR2. The LPXTG sorting signal motif lies at Leu2229–Gly2233. The residue at position 2232 (Thr2232) is a Pentaglycyl murein peptidoglycan amidated threonine. Residues Gly2233 to Ala2271 constitute a propeptide, removed by sortase.

Belongs to the serine-rich repeat protein (SRRP) family. In terms of processing, proteolytically cleaved by a metalloprotease. Post-translationally, glycosylated. It is probable that most of the Ser residues in SSR1 and SSR2 are O-GlcNAcylated. Sequential glycosylation by sugar transferases are able to generate complex sugar polymorphisms.

The protein localises to the secreted. It localises to the cell wall. Functionally, mediates binding to human platelets, possibly through a receptor-ligand interaction. Probably associated with virulence in endovascular infection. Plays a positive role in biofilm formation, possibly by self-association via the non-repeat region (NRR or binding region, BR). Binds to and plays a role in human lung epithelial cell invasion via the L-lectin module of its NRR domain; N-acetylneuraminic acid (Neu5Ac) inhibits binding. Treatment of host cells with neuraminidase decreases adherence of S.aureus cells, suggesting SraP recognizes a host terminal Neu5Ac moiety as a receptor. In Staphylococcus aureus (strain NCTC 8325 / PS 47), this protein is Serine-rich adhesin for platelets.